A 284-amino-acid polypeptide reads, in one-letter code: Nodulation protein O (284 aa).

The tract at residues 1–27 (MNIKGSDNGSFIKGSPENDIIDGGKKN) is disordered. Hemolysin-type calcium-binding repeat units lie at residues 13 to 30 (KGSP…NDWI), 31 to 48 (DAGN…QDSI), 58 to 75 (WAGK…DDLL), 94 to 111 (HSGE…SDIL), and 112 to 129 (VAGD…GDAF). Positions 100, 109, 118, and 127 each coordinate Ca(2+). Positions 208–222 (DRGFASAAAAATAID) are export signal (aspartic acid box).

It is found in the secreted. Its function is as follows. The NodO protein may play a role in nodule development by direct interaction with the root hair cells or some other plant surface in a calcium-dependent manner. The chain is Nodulation protein O (nodO) from Rhizobium leguminosarum bv. viciae.